The primary structure comprises 73 residues: uncharacterized protein (73 aa).

Belongs to the YeeT/YkfH/YpjJ family.

This is an uncharacterized protein from Escherichia coli (strain K12).